A 207-amino-acid chain; its full sequence is Ras-related protein Rab-2A (207 aa).

12 to 20 (GDTGVGKSC) is a binding site for GTP. An Effector region motif is present at residues 34–42 (HDLTIGVEF). GTP is bound by residues 60-64 (DTAGQ), 118-121 (NKSD), and 148-150 (SAK). Residues 187–207 (GAPTSKQDGTDQKPAGGGCCK) form a disordered region. Residues Cys205 and Cys206 are each lipidated (S-geranylgeranyl cysteine).

This sequence belongs to the small GTPase superfamily. Rab family.

Its subcellular location is the cell membrane. The enzyme catalyses GTP + H2O = GDP + phosphate + H(+). Its activity is regulated as follows. Regulated by guanine nucleotide exchange factors (GEFs) which promote the exchange of bound GDP for free GTP, GTPase activating proteins (GAPs) which increase the GTP hydrolysis activity, and GDP dissociation inhibitors which inhibit the dissociation of the nucleotide from the GTPase. In terms of biological role, the small GTPases Rab are key regulators of intracellular membrane trafficking, from the formation of transport vesicles to their fusion with membranes. Rabs cycle between active GTP-bound and inactive GDP-bound states. In their active state, drive transport of vesicular carriers from donor organelles to acceptor organelles to regulate the membrane traffic that maintains organelle identity and morphology. The sequence is that of Ras-related protein Rab-2A (rab2A) from Dictyostelium discoideum (Social amoeba).